The chain runs to 778 residues: Ral guanine nucleotide dissociation stimulator-like 2 (778 aa).

A compositionally biased stretch (low complexity) spans 1–15; sequence MLPRPLRLLLDTTPP. The segment at 1–59 is disordered; that stretch reads MLPRPLRLLLDTTPPGGVVLSSFRSRDPEEGGDPGGRAVGGGQEEEDEEEEEASVSVWD. Over residues 33-42 the composition is skewed to gly residues; it reads DPGGRAVGGG. Acidic residues predominate over residues 43–59; the sequence is QEEEDEEEEEASVSVWD. In terms of domain architecture, N-terminal Ras-GEF spans 88–212; it reads SSRRLRAGTL…GSADLIRNLR (125 aa). The Ras-GEF domain occupies 243–513; it reads LADHLAEQLT…HRVSCEVEPP (271 aa). 4 disordered regions span residues 503–524, 541–564, 581–647, and 735–769; these read SHRVSCEVEPPGTSDSPAARTP, GGPTPLVSWDRPSVGGDEVPGTPA, SLDS…GPGS, and RRPSAATPGSHSGPSASGTPPSEGGGGSFPRIKAT. The span at 581-592 shows a compositional bias: low complexity; sequence SLDSALESSPSL. A compositionally biased stretch (polar residues) spans 620–632; sequence CGSPLSGNTGEGT. Positions 649–736 constitute a Ras-associating domain; the sequence is DCRIIRVQME…HDFLLRQRRR (88 aa). A compositionally biased stretch (low complexity) spans 738-756; the sequence is SAATPGSHSGPSASGTPPS.

As to quaternary structure, interacts with SAMD9.

Probable guanine nucleotide exchange factor. Putative effector of Ras and/or Rap. Associates with the GTP-bound form of Rap 1A and H-Ras in vitro. The protein is Ral guanine nucleotide dissociation stimulator-like 2 (Rgl2) of Mus musculus (Mouse).